A 339-amino-acid polypeptide reads, in one-letter code: Glycerol-3-phosphate dehydrogenase [NAD(P)+] (339 aa).

Residues Ser-13, Trp-14, and Lys-108 each contribute to the NADPH site. 3 residues coordinate sn-glycerol 3-phosphate: Lys-108, Gly-139, and Ser-141. Ala-143 provides a ligand contact to NADPH. The sn-glycerol 3-phosphate site is built by Lys-194, Asp-247, Ser-257, Arg-258, and Asn-259. The active-site Proton acceptor is the Lys-194. Residue Arg-258 participates in NADPH binding. The NADPH site is built by Val-282 and Glu-284.

This sequence belongs to the NAD-dependent glycerol-3-phosphate dehydrogenase family.

The protein localises to the cytoplasm. The catalysed reaction is sn-glycerol 3-phosphate + NAD(+) = dihydroxyacetone phosphate + NADH + H(+). It carries out the reaction sn-glycerol 3-phosphate + NADP(+) = dihydroxyacetone phosphate + NADPH + H(+). It participates in membrane lipid metabolism; glycerophospholipid metabolism. Its function is as follows. Catalyzes the reduction of the glycolytic intermediate dihydroxyacetone phosphate (DHAP) to sn-glycerol 3-phosphate (G3P), the key precursor for phospholipid synthesis. In Streptococcus equi subsp. equi (strain 4047), this protein is Glycerol-3-phosphate dehydrogenase [NAD(P)+].